Reading from the N-terminus, the 230-residue chain is Orotidine 5'-phosphate decarboxylase (230 aa).

Residues Asp8, Lys30, 59–68, Thr118, Arg178, Gln187, Gly207, and Arg208 each bind substrate; that span reads DLKLYDIPNT. Lys61 (proton donor) is an active-site residue.

It belongs to the OMP decarboxylase family. Type 1 subfamily. Homodimer.

The catalysed reaction is orotidine 5'-phosphate + H(+) = UMP + CO2. The protein operates within pyrimidine metabolism; UMP biosynthesis via de novo pathway; UMP from orotate: step 2/2. Its function is as follows. Catalyzes the decarboxylation of orotidine 5'-monophosphate (OMP) to uridine 5'-monophosphate (UMP). The chain is Orotidine 5'-phosphate decarboxylase from Sulfurovum sp. (strain NBC37-1).